We begin with the raw amino-acid sequence, 324 residues long: NADH-ubiquinone oxidoreductase chain 1 (324 aa).

The next 8 membrane-spanning stretches (helical) occupy residues 10-30 (MIMT…LTLV), 76-96 (FLFI…WTPL), 107-127 (LGLL…LWSG), 143-163 (VAQT…TIML), 178-198 (PMYL…STLA), 229-249 (LFFL…ITLF), 260-280 (ELFS…FLWI), and 300-320 (FLPL…SYAG).

The protein belongs to the complex I subunit 1 family.

Its subcellular location is the mitochondrion inner membrane. The catalysed reaction is a ubiquinone + NADH + 5 H(+)(in) = a ubiquinol + NAD(+) + 4 H(+)(out). Its function is as follows. Core subunit of the mitochondrial membrane respiratory chain NADH dehydrogenase (Complex I) that is believed to belong to the minimal assembly required for catalysis. Complex I functions in the transfer of electrons from NADH to the respiratory chain. The immediate electron acceptor for the enzyme is believed to be ubiquinone. This Coturnix japonica (Japanese quail) protein is NADH-ubiquinone oxidoreductase chain 1 (MT-ND1).